The sequence spans 472 residues: H(+)/Cl(-) exchange transporter ClcA (472 aa).

Residues 1–32 lie on the Cytoplasmic side of the membrane; sequence MKAETPSFEAHQFVRVRRGDAVRRLIQRDKTP. The helical transmembrane segment at 33 to 69 threads the bilayer; that stretch reads LAVLLMAAVVGTLAGLVGVAFEKSVNWVQNQRIGALA. The Periplasmic portion of the chain corresponds to 70 to 76; it reads QVADHWY. A helical membrane pass occupies residues 77–100; sequence LVWPLAFILSALLAMVGYFLVRRF. Residues 106–110 carry the Selectivity filter part_1 motif; it reads GSGIP. Ser107 provides a ligand contact to chloride. The helical intramembrane region spans 109–116; the sequence is IPEIEGAL. The Cytoplasmic portion of the chain corresponds to 117 to 123; the sequence is EELRPVR. Transmembrane regions (helical) follow at residues 124–141 and 148–166; these read WWRVLPVKFIGGMGTLGA and EGPMVQLGGNIGRMVLDIF. The Selectivity filter part_2 signature appears at 146 to 150; the sequence is GREGP. The Cytoplasmic segment spans residues 167–176; sequence RMRSPEARHT. 2 intramembrane regions (helical) span residues 177–189 and 193–201; these read LLATGAASGLSAA and PLAGILFII. At 202-214 the chain is on the cytoplasmic side; sequence EEMRPQFRYNLIS. The chain crosses the membrane as a helical span at residues 215–232; it reads IKAVFTGVIMSSIVFRIF. Residues 233–252 lie on the Periplasmic side of the membrane; that stretch reads NGEAAIIEVGKLSNAPVNTL. A helical transmembrane segment spans residues 253 to 281; sequence WLYLVLGMLFGCFGPLFNFLVLRTQDIFQ. Residues 282–287 are Cytoplasmic-facing; it reads RIHGGN. The chain crosses the membrane as a helical span at residues 288–309; the sequence is IKTWVLMGGVIGGICGLLGLMQ. Over 310–329 the chain is Periplasmic; that stretch reads PSAVGGGFNLIPIAAAGNFS. 2 consecutive transmembrane segments (helical) span residues 330 to 349 and 355 to 376; these read VGLLLFIFIARVVTTLICFS and GIFAPMLALGTLLGTAFGMAAI. The Selectivity filter part_3 motif lies at 355 to 359; that stretch reads GIFAP. Chloride-binding residues include Ile356 and Phe357. At 377 to 386 the chain is on the periplasmic side; that stretch reads PLFPAYHLDA. The helical intramembrane region spans 387–401; that stretch reads GTFAIAGMGALLAAS. The segment at residues 402–404 is an intramembrane region (note=Loop between two helices); the sequence is VRA. An intramembrane region (helical) is located at residues 405–416; that stretch reads PLTGIVLVLEMT. Positions 417–421 form an intramembrane region, note=Loop between two helices; it reads DNYQL. The chain crosses the membrane as a helical span at residues 422–438; the sequence is ILPMIITCLGATLLAQF. The Cytoplasmic portion of the chain corresponds to 439–472; sequence LGGKPLYSTILQRTLAKQEAEQAAKAQQAPRENT. Residue Tyr445 coordinates chloride.

Belongs to the chloride channel (TC 2.A.49) family. ClcA subfamily. In terms of assembly, homodimer.

The protein localises to the cell inner membrane. The enzyme catalyses 2 chloride(in) + H(+)(out) = 2 chloride(out) + H(+)(in). Proton-coupled chloride transporter. Functions as antiport system and exchanges two chloride ions for 1 proton. Probably acts as an electrical shunt for an outwardly-directed proton pump that is linked to amino acid decarboxylation, as part of the extreme acid resistance (XAR) response. This is H(+)/Cl(-) exchange transporter ClcA from Klebsiella pneumoniae (strain 342).